The primary structure comprises 439 residues: Proline--tRNA ligase (439 aa).

Belongs to the class-II aminoacyl-tRNA synthetase family. ProS type 2 subfamily. Homodimer.

It localises to the cytoplasm. It catalyses the reaction tRNA(Pro) + L-proline + ATP = L-prolyl-tRNA(Pro) + AMP + diphosphate. Functionally, catalyzes the attachment of proline to tRNA(Pro) in a two-step reaction: proline is first activated by ATP to form Pro-AMP and then transferred to the acceptor end of tRNA(Pro). The sequence is that of Proline--tRNA ligase from Rhodopseudomonas palustris (strain BisA53).